The sequence spans 179 residues: Fas apoptotic inhibitory molecule 1 (179 aa).

Threonine 2 is subject to N-acetylthreonine.

It belongs to the FAIM1 family.

Its subcellular location is the cytoplasm. Functionally, plays a role as an inducible effector molecule that mediates Fas resistance produced by surface Ig engagement in B cells. The chain is Fas apoptotic inhibitory molecule 1 (FAIM) from Homo sapiens (Human).